The sequence spans 455 residues: Ribulose bisphosphate carboxylase large chain (455 aa).

An N6,N6,N6-trimethyllysine modification is found at Lys5. Residues Asn114 and Thr164 each contribute to the substrate site. Lys166 (proton acceptor) is an active-site residue. Residue Lys168 coordinates substrate. Mg(2+)-binding residues include Lys192, Asp194, and Glu195. Position 192 is an N6-carboxylysine (Lys192). His285 serves as the catalytic Proton acceptor. Substrate contacts are provided by Arg286, His318, and Ser370.

It belongs to the RuBisCO large chain family. Type I subfamily. As to quaternary structure, heterohexadecamer of 8 large chains and 8 small chains; disulfide-linked. The disulfide link is formed within the large subunit homodimers. Mg(2+) is required as a cofactor. Post-translationally, the disulfide bond which can form in the large chain dimeric partners within the hexadecamer appears to be associated with oxidative stress and protein turnover.

The protein localises to the plastid. It is found in the chloroplast. The enzyme catalyses 2 (2R)-3-phosphoglycerate + 2 H(+) = D-ribulose 1,5-bisphosphate + CO2 + H2O. It catalyses the reaction D-ribulose 1,5-bisphosphate + O2 = 2-phosphoglycolate + (2R)-3-phosphoglycerate + 2 H(+). In terms of biological role, ruBisCO catalyzes two reactions: the carboxylation of D-ribulose 1,5-bisphosphate, the primary event in carbon dioxide fixation, as well as the oxidative fragmentation of the pentose substrate in the photorespiration process. Both reactions occur simultaneously and in competition at the same active site. This chain is Ribulose bisphosphate carboxylase large chain, found in Brownea coccinea (Rose of Venezuela).